Here is a 432-residue protein sequence, read N- to C-terminus: Glutamyl-tRNA reductase (432 aa).

Substrate-binding positions include 49–52, S107, 112–114, and Q118; these read TCNR and ETQ. C50 (nucleophile) is an active-site residue. An NADP(+)-binding site is contributed by 186 to 191; sequence GAGEMG.

It belongs to the glutamyl-tRNA reductase family. In terms of assembly, homodimer.

It carries out the reaction (S)-4-amino-5-oxopentanoate + tRNA(Glu) + NADP(+) = L-glutamyl-tRNA(Glu) + NADPH + H(+). Its pathway is porphyrin-containing compound metabolism; protoporphyrin-IX biosynthesis; 5-aminolevulinate from L-glutamyl-tRNA(Glu): step 1/2. Functionally, catalyzes the NADPH-dependent reduction of glutamyl-tRNA(Glu) to glutamate 1-semialdehyde (GSA). This chain is Glutamyl-tRNA reductase, found in Campylobacter jejuni subsp. doylei (strain ATCC BAA-1458 / RM4099 / 269.97).